We begin with the raw amino-acid sequence, 860 residues long: Leucine--tRNA ligase (860 aa).

The 'HIGH' region motif lies at 42-52; that stretch reads PYPSGRLHMGH. Residues 619–623 carry the 'KMSKS' region motif; sequence KMSKS. ATP is bound at residue Lys-622.

The protein belongs to the class-I aminoacyl-tRNA synthetase family.

It is found in the cytoplasm. It catalyses the reaction tRNA(Leu) + L-leucine + ATP = L-leucyl-tRNA(Leu) + AMP + diphosphate. The sequence is that of Leucine--tRNA ligase from Escherichia coli O7:K1 (strain IAI39 / ExPEC).